Reading from the N-terminus, the 315-residue chain is Acetyl-coenzyme A carboxylase carboxyl transferase subunit alpha (315 aa).

The CoA carboxyltransferase C-terminal domain maps to 38–292; that stretch reads RLQKKSNELT…KLRLKEDLAE (255 aa).

The protein belongs to the AccA family. In terms of assembly, acetyl-CoA carboxylase is a heterohexamer composed of biotin carboxyl carrier protein (AccB), biotin carboxylase (AccC) and two subunits each of ACCase subunit alpha (AccA) and ACCase subunit beta (AccD).

The protein localises to the cytoplasm. The enzyme catalyses N(6)-carboxybiotinyl-L-lysyl-[protein] + acetyl-CoA = N(6)-biotinyl-L-lysyl-[protein] + malonyl-CoA. It participates in lipid metabolism; malonyl-CoA biosynthesis; malonyl-CoA from acetyl-CoA: step 1/1. Its function is as follows. Component of the acetyl coenzyme A carboxylase (ACC) complex. First, biotin carboxylase catalyzes the carboxylation of biotin on its carrier protein (BCCP) and then the CO(2) group is transferred by the carboxyltransferase to acetyl-CoA to form malonyl-CoA. The sequence is that of Acetyl-coenzyme A carboxylase carboxyl transferase subunit alpha from Haemophilus influenzae (strain PittEE).